A 143-amino-acid polypeptide reads, in one-letter code: Large ribosomal subunit protein uL11 (143 aa).

This sequence belongs to the universal ribosomal protein uL11 family. Part of the ribosomal stalk of the 50S ribosomal subunit. Interacts with L10 and the large rRNA to form the base of the stalk. L10 forms an elongated spine to which L12 dimers bind in a sequential fashion forming a multimeric L10(L12)X complex. In terms of processing, one or more lysine residues are methylated.

In terms of biological role, forms part of the ribosomal stalk which helps the ribosome interact with GTP-bound translation factors. The protein is Large ribosomal subunit protein uL11 of Pseudomonas entomophila (strain L48).